The primary structure comprises 339 residues: GTPase Obg (339 aa).

One can recognise an Obg domain in the interval 1–159; sequence MKFVDEAFVR…RELKLELKLL (159 aa). Residues 160 to 333 form the OBG-type G domain; it reads ADVGLLGLPN…LCYDLMSFLE (174 aa). Residues 166-173, 191-195, 213-216, 283-286, and 314-316 each bind GTP; these read GLPNAGKS, FTTLY, DIPG, NKID, and SAI. Mg(2+)-binding residues include S173 and T193.

Belongs to the TRAFAC class OBG-HflX-like GTPase superfamily. OBG GTPase family. In terms of assembly, monomer. Mg(2+) serves as cofactor.

Its subcellular location is the cytoplasm. In terms of biological role, an essential GTPase which binds GTP, GDP and possibly (p)ppGpp with moderate affinity, with high nucleotide exchange rates and a fairly low GTP hydrolysis rate. Plays a role in control of the cell cycle, stress response, ribosome biogenesis and in those bacteria that undergo differentiation, in morphogenesis control. This is GTPase Obg from Coxiella burnetii (strain RSA 331 / Henzerling II).